A 201-amino-acid polypeptide reads, in one-letter code: Recombination protein RecR (201 aa).

A C4-type zinc finger spans residues 60–75; sequence CSVCGNVDSCDPCTIC. Residues 83–178 form the Toprim domain; it reads STLIVVETVG…RTTRLAHGVP (96 aa).

This sequence belongs to the RecR family.

In terms of biological role, may play a role in DNA repair. It seems to be involved in an RecBC-independent recombinational process of DNA repair. It may act with RecF and RecO. The protein is Recombination protein RecR of Methylocella silvestris (strain DSM 15510 / CIP 108128 / LMG 27833 / NCIMB 13906 / BL2).